The sequence spans 481 residues: ATP synthase subunit beta, chloroplastic (481 aa).

161-168 (GGAGVGKT) contributes to the ATP binding site.

This sequence belongs to the ATPase alpha/beta chains family. As to quaternary structure, F-type ATPases have 2 components, CF(1) - the catalytic core - and CF(0) - the membrane proton channel. CF(1) has five subunits: alpha(3), beta(3), gamma(1), delta(1), epsilon(1). CF(0) has four main subunits: a(1), b(1), b'(1) and c(9-12).

It is found in the plastid. The protein resides in the chloroplast thylakoid membrane. It carries out the reaction ATP + H2O + 4 H(+)(in) = ADP + phosphate + 5 H(+)(out). Functionally, produces ATP from ADP in the presence of a proton gradient across the membrane. The catalytic sites are hosted primarily by the beta subunits. The sequence is that of ATP synthase subunit beta, chloroplastic from Pylaiella littoralis (Seaweed).